A 447-amino-acid chain; its full sequence is Phosphoglucosamine mutase (447 aa).

The Phosphoserine intermediate role is filled by serine 101. 4 residues coordinate Mg(2+): serine 101, aspartate 242, aspartate 244, and aspartate 246. Position 101 is a phosphoserine (serine 101).

The protein belongs to the phosphohexose mutase family. Requires Mg(2+) as cofactor. Activated by phosphorylation.

The enzyme catalyses alpha-D-glucosamine 1-phosphate = D-glucosamine 6-phosphate. Functionally, catalyzes the conversion of glucosamine-6-phosphate to glucosamine-1-phosphate. In Methylobacterium radiotolerans (strain ATCC 27329 / DSM 1819 / JCM 2831 / NBRC 15690 / NCIMB 10815 / 0-1), this protein is Phosphoglucosamine mutase.